Consider the following 387-residue polypeptide: 3-ketoacyl-CoA thiolase (387 aa).

The active-site Acyl-thioester intermediate is C91. Catalysis depends on proton acceptor residues H343 and C373.

Belongs to the thiolase-like superfamily. Thiolase family. In terms of assembly, heterotetramer of two alpha chains (FadB) and two beta chains (FadA).

The protein resides in the cytoplasm. The catalysed reaction is an acyl-CoA + acetyl-CoA = a 3-oxoacyl-CoA + CoA. Its pathway is lipid metabolism; fatty acid beta-oxidation. In terms of biological role, catalyzes the final step of fatty acid oxidation in which acetyl-CoA is released and the CoA ester of a fatty acid two carbons shorter is formed. This chain is 3-ketoacyl-CoA thiolase, found in Shigella sonnei (strain Ss046).